A 185-amino-acid chain; its full sequence is Pap fimbrial major pilin protein (185 aa).

A signal peptide spans 1-22 (MIKSVIAGAVAMAVVSFGVNNA). A disulfide bond links Cys44 and Cys83.

It belongs to the fimbrial protein family.

The protein localises to the secreted. It is found in the fimbrium. In terms of biological role, polymerizes to form the thick (6.8 nm in diameter) rod of the pilus (also called fimbria). The rod is a right-handed helical cylinder with 3.28 PapA subunits per turn. Pili are polar filaments radiating from the surface of the bacterium to a length of 0.5-1.5 micrometers and numbering 100-300 per cell, and enable bacteria to colonize the epithelium of specific host organs. The polypeptide is Pap fimbrial major pilin protein (papA) (Escherichia coli).